The sequence spans 90 residues: Small ribosomal subunit protein bS16 (90 aa).

This sequence belongs to the bacterial ribosomal protein bS16 family.

The polypeptide is Small ribosomal subunit protein bS16 (Lactococcus lactis subsp. cremoris (strain MG1363)).